The chain runs to 457 residues: tRNA modification GTPase MnmE (457 aa).

(6S)-5-formyl-5,6,7,8-tetrahydrofolate is bound by residues arginine 23, glutamate 85, and arginine 124. The 157-residue stretch at 220-376 (GALVVLAGQV…LVTAIRAAVL (157 aa)) folds into the TrmE-type G domain. K(+) is bound at residue asparagine 230. GTP is bound by residues 230–235 (NAGKSS), 249–255 (TDLPGTT), and 274–277 (DTAG). Residue serine 234 participates in Mg(2+) binding. K(+)-binding residues include threonine 249, leucine 251, and threonine 254. Mg(2+) is bound at residue threonine 255. Lysine 457 contacts (6S)-5-formyl-5,6,7,8-tetrahydrofolate.

Belongs to the TRAFAC class TrmE-Era-EngA-EngB-Septin-like GTPase superfamily. TrmE GTPase family. As to quaternary structure, homodimer. Heterotetramer of two MnmE and two MnmG subunits. The cofactor is K(+).

The protein localises to the cytoplasm. Exhibits a very high intrinsic GTPase hydrolysis rate. Involved in the addition of a carboxymethylaminomethyl (cmnm) group at the wobble position (U34) of certain tRNAs, forming tRNA-cmnm(5)s(2)U34. This is tRNA modification GTPase MnmE from Nitratidesulfovibrio vulgaris (strain ATCC 29579 / DSM 644 / CCUG 34227 / NCIMB 8303 / VKM B-1760 / Hildenborough) (Desulfovibrio vulgaris).